The primary structure comprises 219 residues: Orotate phosphoribosyltransferase (219 aa).

Lysine 26 provides a ligand contact to 5-phospho-alpha-D-ribose 1-diphosphate. Orotate is bound at residue 34–35 (FF). 5-phospho-alpha-D-ribose 1-diphosphate-binding positions include 72 to 73 (YK), arginine 98, lysine 99, lysine 102, histidine 104, and 124 to 132 (DDVITAGTA). Orotate is bound by residues threonine 128 and arginine 156.

The protein belongs to the purine/pyrimidine phosphoribosyltransferase family. PyrE subfamily. In terms of assembly, homodimer. Mg(2+) is required as a cofactor.

It carries out the reaction orotidine 5'-phosphate + diphosphate = orotate + 5-phospho-alpha-D-ribose 1-diphosphate. Its pathway is pyrimidine metabolism; UMP biosynthesis via de novo pathway; UMP from orotate: step 1/2. Catalyzes the transfer of a ribosyl phosphate group from 5-phosphoribose 1-diphosphate to orotate, leading to the formation of orotidine monophosphate (OMP). The polypeptide is Orotate phosphoribosyltransferase (Xylella fastidiosa (strain Temecula1 / ATCC 700964)).